A 151-amino-acid polypeptide reads, in one-letter code: MTGLERQLTEMLEAPVGALGYELVGLEFVRAGEHSTLRVFIDHENGIFVEDCAEASRQISAVMDVEDPITVAYNLEVSSPGLERPLFKAAHYQQFVGHEVSLVLKMPMNNRRKWKGDILEINGEIVTVTVDGNNEEFALSNISKANLVPKF.

It belongs to the RimP family.

It is found in the cytoplasm. Functionally, required for maturation of 30S ribosomal subunits. In Aliivibrio fischeri (strain ATCC 700601 / ES114) (Vibrio fischeri), this protein is Ribosome maturation factor RimP.